A 79-amino-acid chain; its full sequence is Cytochrome b (79 aa).

3 helical membrane passes run 1 to 7 (SALFLAM), 31 to 52 (WLIR…YLHI), and 67 to 79 (WNIG…LTMA). His-37 and His-51 together coordinate heme b.

Belongs to the cytochrome b family. In terms of assembly, the cytochrome bc1 complex contains 11 subunits: 3 respiratory subunits (MT-CYB, CYC1 and UQCRFS1), 2 core proteins (UQCRC1 and UQCRC2) and 6 low-molecular weight proteins (UQCRH/QCR6, UQCRB/QCR7, UQCRQ/QCR8, UQCR10/QCR9, UQCR11/QCR10 and a cleavage product of UQCRFS1). This cytochrome bc1 complex then forms a dimer. Requires heme b as cofactor.

It is found in the mitochondrion inner membrane. Functionally, component of the ubiquinol-cytochrome c reductase complex (complex III or cytochrome b-c1 complex) that is part of the mitochondrial respiratory chain. The b-c1 complex mediates electron transfer from ubiquinol to cytochrome c. Contributes to the generation of a proton gradient across the mitochondrial membrane that is then used for ATP synthesis. This is Cytochrome b (MT-CYB) from Dipodomys panamintinus (Panamint kangaroo rat).